The primary structure comprises 159 residues: Ribosomal RNA large subunit methyltransferase H (159 aa).

Residue glycine 108 coordinates S-adenosyl-L-methionine.

Belongs to the RNA methyltransferase RlmH family. Homodimer.

Its subcellular location is the cytoplasm. The enzyme catalyses pseudouridine(1915) in 23S rRNA + S-adenosyl-L-methionine = N(3)-methylpseudouridine(1915) in 23S rRNA + S-adenosyl-L-homocysteine + H(+). Specifically methylates the pseudouridine at position 1915 (m3Psi1915) in 23S rRNA. This is Ribosomal RNA large subunit methyltransferase H from Lactobacillus gasseri (strain ATCC 33323 / DSM 20243 / BCRC 14619 / CIP 102991 / JCM 1131 / KCTC 3163 / NCIMB 11718 / NCTC 13722 / AM63).